We begin with the raw amino-acid sequence, 573 residues long: uncharacterized protein (573 aa).

Disordered regions lie at residues M1 to R33 and L60 to D101. The segment covering L60–N70 has biased composition (polar residues). Residue N63 is glycosylated (N-linked (GlcNAc...) asparagine). Residues S84 to N95 are compositionally biased toward low complexity. A run of 10 repeats spans residues N102–M103, N104–M105, N106–M107, N108–M109, N110–M111, N112–M113, N114–M115, N116–M117, N118–M119, and N120–M121. A 10 X 2 AA tandem repeats of N-M region spans residues N102–M121. A glycan (N-linked (GlcNAc...) asparagine) is linked at N123. Disordered regions lie at residues I150–R174, Q192–N271, K286–S317, and N357–T379. Polar residues predominate over residues S157–N170. Over residues L208–L225 the composition is skewed to low complexity. Residues T226–K252 show a composition bias toward polar residues. N236 carries an N-linked (GlcNAc...) asparagine glycan. N-linked (GlcNAc...) asparagine glycosylation is found at N437 and N442. Low complexity-rich tracts occupy residues I441–S457 and S466–K483. The disordered stretch occupies residues I441 to K483. Residues N498, N535, and N541 are each glycosylated (N-linked (GlcNAc...) asparagine).

The protein to yeast AFR1. Post-translationally, N-glycosylated.

This is an uncharacterized protein from Saccharomyces cerevisiae (strain ATCC 204508 / S288c) (Baker's yeast).